The sequence spans 428 residues: Nocturnin (428 aa).

Residues 1–72 (MYQSPRRLCS…PMGNGTSRLY (72 aa)) constitute a mitochondrion transit peptide. The segment at 21–66 (RRTLVPGPRRTLAPPVLGSRPASPQLQAAASGAARSRPRTVSPMGN) is disordered. The segment covering 39 to 55 (SRPASPQLQAAASGAAR) has biased composition (low complexity). Glu192 provides a ligand contact to Mg(2+). Substrate contacts are provided by residues Glu192, 216–218 (KPW), Asn260, 283–286 (HLKA), and 321–323 (DFN). The tract at residues 340-350 (NLNSAYKLLSP) is interaction with PPARG. His411 is a binding site for substrate.

Belongs to the CCR4/nocturin family. As to quaternary structure, interacts with PPARG. The cofactor is Mg(2+).

The protein resides in the cytoplasm. The protein localises to the nucleus. It is found in the perinuclear region. It localises to the mitochondrion. It catalyses the reaction NADP(+) + H2O = phosphate + NAD(+). The enzyme catalyses NADPH + H2O = phosphate + NADH. In terms of biological role, phosphatase which catalyzes the conversion of NADP(+) to NAD(+) and of NADPH to NADH. Shows a small preference for NADPH over NADP(+). Represses translation and promotes degradation of target mRNA molecules. Plays an important role in post-transcriptional regulation of metabolic genes under circadian control. Exerts a rhythmic post-transcriptional control of genes necessary for metabolic functions including nutrient absorption, glucose/insulin sensitivity, lipid metabolism, adipogenesis, inflammation and osteogenesis. Plays an important role in favoring adipogenesis over osteoblastogenesis and acts as a key regulator of the adipogenesis/osteogenesis balance. Promotes adipogenesis by facilitating PPARG nuclear translocation which activates its transcriptional activity. Regulates circadian expression of NOS2 in the liver and negatively regulates the circadian expression of IGF1 in the bone. Critical for proper development of early embryos. The chain is Nocturnin from Rattus norvegicus (Rat).